The following is a 133-amino-acid chain: Fatty acid-binding protein, heart (133 aa).

Residue Val-2 is modified to N-acetylvaline. Phosphothreonine is present on Thr-8. A Phosphotyrosine; by Tyr-kinases modification is found at Tyr-20. Ser-23 carries the post-translational modification Phosphoserine. Thr-30 carries the post-translational modification Phosphothreonine. A Phosphoserine modification is found at Ser-83. Residue 127-129 (RTY) coordinates (9Z)-octadecenoate. 127–129 (RTY) serves as a coordination point for hexadecanoate. 127-129 (RTY) serves as a coordination point for octadecanoate.

The protein belongs to the calycin superfamily. Fatty-acid binding protein (FABP) family.

The protein localises to the cytoplasm. In terms of biological role, FABPs are thought to play a role in the intracellular transport of long-chain fatty acids and their acyl-CoA esters. This chain is Fatty acid-binding protein, heart (FABP3), found in Sus scrofa (Pig).